A 129-amino-acid polypeptide reads, in one-letter code: Small ribosomal subunit protein uS11 (129 aa).

The protein belongs to the universal ribosomal protein uS11 family. Part of the 30S ribosomal subunit. Interacts with proteins S7 and S18. Binds to IF-3.

Located on the platform of the 30S subunit, it bridges several disparate RNA helices of the 16S rRNA. Forms part of the Shine-Dalgarno cleft in the 70S ribosome. This is Small ribosomal subunit protein uS11 from Aeromonas hydrophila subsp. hydrophila (strain ATCC 7966 / DSM 30187 / BCRC 13018 / CCUG 14551 / JCM 1027 / KCTC 2358 / NCIMB 9240 / NCTC 8049).